The following is a 549-amino-acid chain: Cation/acetate symporter ActP (549 aa).

Transmembrane regions (helical) follow at residues 33 to 53 (WQAI…TYWA), 77 to 97 (LAIA…ALVF), 103 to 123 (GLIY…LIAE), 148 to 168 (ILSA…QMVG), 183 to 203 (IAVV…GMLA), 206 to 226 (WVQI…AFMV), 262 to 282 (ISAL…PHIL), 303 to 323 (GFMG…IMLV), 355 to 375 (LFLG…VAGL), 404 to 424 (VSKI…ILFE), 428 to 448 (IAFM…PIIL), 464 to 484 (GGWL…TIWV), and 493 to 513 (IFPY…GIWF).

Belongs to the sodium:solute symporter (SSF) (TC 2.A.21) family.

Its subcellular location is the cell inner membrane. Transports acetate. The polypeptide is Cation/acetate symporter ActP (Salmonella newport (strain SL254)).